A 315-amino-acid chain; its full sequence is tRNA dimethylallyltransferase (315 aa).

14-21 (GPTASGKT) lines the ATP pocket. A substrate-binding site is contributed by 16 to 21 (TASGKT). Interaction with substrate tRNA regions lie at residues 39–42 (DSAL), 163–167 (QRIQR), and 248–253 (RCVGYR).

The protein belongs to the IPP transferase family. Monomer. Mg(2+) is required as a cofactor.

It carries out the reaction adenosine(37) in tRNA + dimethylallyl diphosphate = N(6)-dimethylallyladenosine(37) in tRNA + diphosphate. In terms of biological role, catalyzes the transfer of a dimethylallyl group onto the adenine at position 37 in tRNAs that read codons beginning with uridine, leading to the formation of N6-(dimethylallyl)adenosine (i(6)A). This Paraburkholderia phytofirmans (strain DSM 17436 / LMG 22146 / PsJN) (Burkholderia phytofirmans) protein is tRNA dimethylallyltransferase.